Here is a 187-residue protein sequence, read N- to C-terminus: Meiotically up-regulated gene 155 protein (187 aa).

The interval Met-1–Asp-24 is disordered. Transmembrane regions (helical) follow at residues Ile-83–His-105 and Val-163–Phe-183.

It localises to the cytoplasm. It is found in the nucleus membrane. Has a role in meiosis. The chain is Meiotically up-regulated gene 155 protein (mug155) from Schizosaccharomyces pombe (strain 972 / ATCC 24843) (Fission yeast).